The following is a 348-amino-acid chain: Anthranilate phosphoribosyltransferase (348 aa).

Residues glycine 89, 92 to 93 (GD), threonine 97, 99 to 102 (NIST), 117 to 125 (KHGNRSASS), and serine 129 each bind 5-phospho-alpha-D-ribose 1-diphosphate. An anthranilate-binding site is contributed by glycine 89. Serine 101 lines the Mg(2+) pocket. Anthranilate is bound at residue asparagine 120. Arginine 175 serves as a coordination point for anthranilate. Mg(2+)-binding residues include aspartate 234 and glutamate 235.

The protein belongs to the anthranilate phosphoribosyltransferase family. In terms of assembly, homodimer. The cofactor is Mg(2+).

It carries out the reaction N-(5-phospho-beta-D-ribosyl)anthranilate + diphosphate = 5-phospho-alpha-D-ribose 1-diphosphate + anthranilate. The protein operates within amino-acid biosynthesis; L-tryptophan biosynthesis; L-tryptophan from chorismate: step 2/5. Its function is as follows. Catalyzes the transfer of the phosphoribosyl group of 5-phosphorylribose-1-pyrophosphate (PRPP) to anthranilate to yield N-(5'-phosphoribosyl)-anthranilate (PRA). The protein is Anthranilate phosphoribosyltransferase of Synechocystis sp. (strain ATCC 27184 / PCC 6803 / Kazusa).